Consider the following 1134-residue polypeptide: Ubinuclein-1 (1134 aa).

2 disordered regions span residues 1–38 (MSEP…HQDC) and 78–98 (LQPG…EKER). Residues 1–166 (MSEPHRVQFT…YGGFYINSGT (166 aa)) are sufficient for interaction with HIRA. Basic and acidic residues-rich tracts occupy residues 25–38 (RKEE…HQDC) and 81–98 (GDKK…EKER). Thr-166 bears the Phosphothreonine mark. Residues 171–220 (QASESEDDFIKEKKKKSPKKRKLKEGGEKIKKKKKDDTYDKEKKSKKSKF) are disordered. Residues Ser-173 and Ser-175 each carry the phosphoserine modification. A compositionally biased stretch (basic residues) spans 182–193 (EKKKKSPKKRKL). The span at 194–213 (KEGGEKIKKKKKDDTYDKEK) shows a compositional bias: basic and acidic residues. An N6-acetyllysine modification is found at Lys-222. Over residues 253–268 (QKEKEAQKKREEEHKP) the composition is skewed to basic and acidic residues. 4 disordered regions span residues 253-282 (QKEK…LREL), 321-358 (SESP…EGLP), 480-504 (EEEK…KGGR), and 594-660 (PSKI…LEDS). Ser-323, Ser-336, Ser-338, and Ser-493 each carry phosphoserine. A coiled-coil region spans residues 479–542 (LEEEKDKEQR…SQDLERNNKA (64 aa)). 2 stretches are compositionally biased toward basic and acidic residues: residues 480 to 493 (EEEK…RICS) and 598 to 610 (KVKE…DKKV). A phosphoserine mark is found at Ser-660 and Ser-677. Disordered regions lie at residues 712–836 (TEEK…SPTQ) and 852–986 (QGFH…GVAK). 2 stretches are compositionally biased toward low complexity: residues 792–804 (GPQV…GPQV) and 856–891 (PSAP…KPHS). The span at 892–905 (VSSAGSSYKNNPFA) shows a compositional bias: polar residues. The segment covering 906-932 (SSISKHGVSSGSSSSGGTPVQSSVSGS) has biased composition (low complexity). The span at 941 to 950 (SVGQATSRPV) shows a compositional bias: polar residues. Over residues 973–982 (PNGDSSGGTQ) the composition is skewed to gly residues. Ser-1025 carries the phosphoserine modification. Over residues 1093–1108 (GLHSSPPHAAPLPHAA) the composition is skewed to low complexity. Residues 1093 to 1134 (GLHSSPPHAAPLPHAAVPTHIPQSLPGASQLHGKGPAVPRKL) form a disordered region.

Belongs to the ubinuclein family. Component of a complex that includes at least ASF1A, CABIN1, HIRA, histone H3.3 and UBN1. Interacts with HIRA (via WD repeat domain); the interaction is direct. Interacts with ASF1A, CEBPA, TJP1, TJP2 and TJP3. In terms of assembly, (Microbial infection) Interacts with Epstein-Barr virus BZLF1. As to expression, ubiquitous. Also expressed in numerous tumors and cancer cell lines.

The protein resides in the nucleus. Its subcellular location is the nucleoplasm. It is found in the PML body. It localises to the cell junction. The protein localises to the tight junction. In terms of biological role, acts as a novel regulator of senescence. Involved in the formation of senescence-associated heterochromatin foci (SAHF), which represses expression of proliferation-promoting genes. Binds to proliferation-promoting genes. May be required for replication-independent chromatin assembly. The protein is Ubinuclein-1 (UBN1) of Homo sapiens (Human).